A 1373-amino-acid polypeptide reads, in one-letter code: DNA-directed RNA polymerase subunit beta'' (1373 aa).

Zn(2+) is bound by residues Cys220, Cys291, Cys298, and Cys301.

Belongs to the RNA polymerase beta' chain family. RpoC2 subfamily. In plastids the minimal PEP RNA polymerase catalytic core is composed of four subunits: alpha, beta, beta', and beta''. When a (nuclear-encoded) sigma factor is associated with the core the holoenzyme is formed, which can initiate transcription. It depends on Zn(2+) as a cofactor.

It localises to the plastid. It is found in the chloroplast. It carries out the reaction RNA(n) + a ribonucleoside 5'-triphosphate = RNA(n+1) + diphosphate. In terms of biological role, DNA-dependent RNA polymerase catalyzes the transcription of DNA into RNA using the four ribonucleoside triphosphates as substrates. This chain is DNA-directed RNA polymerase subunit beta'', found in Silene latifolia (White campion).